A 182-amino-acid chain; its full sequence is MPRVVPDQRSKFENEEFFRKLSRECEIKYTGFRDRPHEERQARFQNACRDGRSEIAFVATGTNLSLQFFPASWQGEQRQTPSREYVDLEREAGKVYLKAPMILNGVCVIWKGWIDLQRLDGMGCLEFDEERAQQEDALAQQAFEEARRRTREFEDRDRSHREEMEVRVSQLLAVTGKKTTRP.

Alanine 173 carries the phosphoserine modification.

It belongs to the CBF-beta family. As to quaternary structure, heterodimer with RUNX1, RUNX2 and RUNX3. Interacts with COPRS. Found in a complex with PRMT5 and RUNX1. (Microbial infection) Interacts with HIV-1 Vif; forming an active cullin-5-RING E3 ubiquitin-protein ligase complex (ECS complex).

It localises to the nucleus. Its function is as follows. Forms the heterodimeric complex core-binding factor (CBF) with RUNX family proteins (RUNX1, RUNX2, and RUNX3). RUNX members modulate the transcription of their target genes through recognizing the core consensus binding sequence 5'-TGTGGT-3', or very rarely, 5'-TGCGGT-3', within their regulatory regions via their runt domain, while CBFB is a non-DNA-binding regulatory subunit that allosterically enhances the sequence-specific DNA-binding capacity of RUNX. The heterodimers bind to the core site of a number of enhancers and promoters, including murine leukemia virus, polyomavirus enhancer, T-cell receptor enhancers, LCK, IL3 and GM-CSF promoters. CBF complexes repress ZBTB7B transcription factor during cytotoxic (CD8+) T cell development. They bind to RUNX-binding sequence within the ZBTB7B locus acting as transcriptional silencer and allowing for cytotoxic T cell differentiation. Functionally, (Microbial infection) Following infection, hijacked by the HIV-1 Vif protein, leading to the formation a cullin-5-RING E3 ubiquitin-protein ligase complex (ECS complex) that catalyzes ubiquitination and degradation of APOBEC3F and APOBEC3G. The complex can also ubiquitinate APOBEC3H to some extent. Association with HIV-1 Vif protein also inhibits the transcription coactivator activity of CBFB/CBF-beta. The chain is Core-binding factor subunit beta (CBFB) from Homo sapiens (Human).